We begin with the raw amino-acid sequence, 114 residues long: uncharacterized protein (114 aa).

3 helical membrane passes run 38 to 60, 64 to 86, and 91 to 113; these read PLWF…TAGI, YAAI…AHMF, and SVIM…MGSY.

Its subcellular location is the cell membrane. This is an uncharacterized protein from Bacillus subtilis (strain 168).